The primary structure comprises 161 residues: MERHFEKVEEILKKYGYKRENLIKILLEIQEIYRYLPEDVINYVSTAMGIPPAKIYGVATFYAQFSLKPKGKYTIMVCDGTACHMAGSPEVLKAIEEETGLTPGNVTEDLMFSLDQVGCLGACALAPVMVINGEVYGNLTADKVKEILRKIKEKERESANV.

Residues C78, C83, C119, and C123 each coordinate [2Fe-2S] cluster.

Belongs to the complex I 24 kDa subunit family. Heterotrimer composed of HydA (alpha subunit), HydB (beta subunit) and HydC (gamma subunit). Near neutral and acidic pH conditions favor oligomerization of the heterotrimeric holoenzyme. [2Fe-2S] cluster serves as cofactor.

The protein localises to the cytoplasm. The enzyme catalyses 2 H2 + 2 oxidized [2Fe-2S]-[ferredoxin] + NAD(+) = 2 reduced [2Fe-2S]-[ferredoxin] + NADH + 3 H(+). Its function is as follows. Catalyzes the oxidation of the physiological electron carriers NADH and reduced ferredoxin, coupled to the production of H(2). Acts as a bifurcating [FeFe] hydrogenase, which uses the exergonic oxidation of reduced ferredoxin to drive the unfavorable oxidation of NADH to produce H(2). The gamma subunit might be the site where reduced ferredoxin is oxidized. The protein is Bifurcating [FeFe] hydrogenase gamma subunit of Thermotoga maritima (strain ATCC 43589 / DSM 3109 / JCM 10099 / NBRC 100826 / MSB8).